The primary structure comprises 101 residues: MAKKGDWVLIHKIVLSPEERAPQVPDDTKKVPLEMWIKGYLNEDAQIGDQVSITTRTKRVEEGKLLEVNPYYTHDFGKFVPELLKISEQVREITFGGEGNE.

It belongs to the OrtA family. Heterodimer with OrtB.

The enzyme catalyses D-alanine + acetyl-CoA = (2R)-2-amino-4-oxopentanoate + CoA. Completely inhibited by p-chloromercuribenzoate (p-ClHgBzO) and acetyl-CoA, and partially inhibited by N-ethylmaleimide. Its function is as follows. Involved in the ornithine fermentation pathway. Catalyzes the thiolytic cleavage of 2-amino-4-ketopentanoate (AKP) with coenzyme A (CoA) to form acetyl-CoA and alanine. It is strictly specific for AKP. The polypeptide is 2-amino-4-ketopentanoate thiolase alpha subunit (Acetoanaerobium sticklandii (strain ATCC 12662 / DSM 519 / JCM 1433 / CCUG 9281 / NCIMB 10654 / HF) (Clostridium sticklandii)).